Reading from the N-terminus, the 90-residue chain is YcgL domain-containing protein Spro_2755 (90 aa).

The YcgL domain maps to 1–85 (MLCVIYRSSK…PLENLLKQHL (85 aa)).

This chain is YcgL domain-containing protein Spro_2755, found in Serratia proteamaculans (strain 568).